The chain runs to 252 residues: Proteasome subunit alpha type-3 (252 aa).

Belongs to the peptidase T1A family. As to quaternary structure, the 26S proteasome consists of a 20S proteasome core and two 19S regulatory subunits. The 20S proteasome core is composed of 28 subunits that are arranged in four stacked rings, resulting in a barrel-shaped structure. The two end rings are each formed by seven alpha subunits, and the two central rings are each formed by seven beta subunits. The catalytic chamber with the active sites is on the inside of the barrel.

Its subcellular location is the cytoplasm. It is found in the nucleus. The proteasome is a multicatalytic proteinase complex which is characterized by its ability to cleave peptides with Arg, Phe, Tyr, Leu, and Glu adjacent to the leaving group at neutral or slightly basic pH. The proteasome has an ATP-dependent proteolytic activity. The chain is Proteasome subunit alpha type-3 from Acanthamoeba castellanii (Amoeba).